The chain runs to 223 residues: Movement and silencing protein TGBp1 (223 aa).

The region spanning 1–136 (METVLSLLNE…QILRDLGYNI (136 aa)) is the (+)RNA virus helicase ATP-binding domain. The (+)RNA virus helicase C-terminal domain maps to 137–223 (ASSKEDIVEK…HRSKLVLVSN (87 aa)).

It belongs to the Tymovirales TGBp1 protein family. As to quaternary structure, homodimer and homooligomer. Interacts with capsid protein. Interacts with host AGO1; this interaction targets the host protein for degradation, thereby suppressing the antiviral RNA silencing.

Its subcellular location is the host cytoplasm. Functionally, transports viral genome to neighboring plant cells directly through plasmosdesmata, without any budding. The movement protein allows efficient cell to cell propagation, by bypassing the host cell wall barrier. Increases plasmodesma size exclusion limit. Acts as a suppressor of RNA-mediated gene silencing, also known as post-transcriptional gene silencing (PTGS), a mechanism of plant viral defense that limits the accumulation of viral RNAs. This chain is Movement and silencing protein TGBp1, found in Crataegus (hawthorn).